Consider the following 765-residue polypeptide: Transcription factor SKN7 (765 aa).

Residues 1-42 (MPPTNGEGGSQQPQQQQQQQQQQQQQQQQQQQQQQGGSGSSD) are disordered. Low complexity predominate over residues 11-35 (QQPQQQQQQQQQQQQQQQQQQQQQQ). The interval 40 to 145 (SSDFVRKLYK…NLDNIRRKAP (106 aa)) is DNA-binding domain. The stretch at 157–198 (FNASQQQIAALSESLQATQQQLQALQQQCYELEKTNRLLVSE) forms a coiled coil. The tract at residues 160 to 220 (SQQQIAALSE…QASNEIINHL (61 aa)) is hydrophobic repeat HR-A/B. Positions 371-391 (SSSQITPSQITPPPKDQMSSM) are disordered. A Response regulatory domain is found at 398–514 (RVLLVEDDKT…NMSRLLRRHL (117 aa)). Position 449 is a 4-aspartylphosphate (D449). The transactivation domain stretch occupies residues 542–765 (TAGPATTGVG…PGVGVAGFVQ (224 aa)). Residues 550–564 (VGVGVAGAPSGGAHG) are compositionally biased toward gly residues. Disordered regions lie at residues 550 to 647 (VGVG…PAGL) and 686 to 765 (PGAM…GFVQ). The span at 569–584 (AQHQQGYAMAPPTTMQ) shows a compositional bias: low complexity. The segment covering 626–636 (QPPPPPTPTQP) has biased composition (pro residues). Composition is skewed to low complexity over residues 637-647 (SPTSAAPPAGL) and 699-715 (GVGH…AGAR). Gly residues predominate over residues 755–765 (HPGVGVAGFVQ).

This sequence belongs to the SKN7 family. As to quaternary structure, homotrimer.

It is found in the nucleus. Transcription factor that is part of a SLN1-YPD1-SKN7 two-component regulatory system, which controls gene expression in response to changes in the osmolarity of the extracellular environment. Under low osmotic conditions, phosphorylated and activated by the phosphorelay intermediate protein YPD1. Also activated in response to oxidative stress, independent on the two-component regulatory system. Regulates heat shock genes in response to oxidative stress and genes involved in cell wall integrity in response to osmotic changes. The protein is Transcription factor SKN7 of Chaetomium thermophilum (strain DSM 1495 / CBS 144.50 / IMI 039719) (Thermochaetoides thermophila).